The following is a 148-amino-acid chain: NADH-quinone oxidoreductase subunit C (148 aa).

This sequence belongs to the complex I 30 kDa subunit family. In terms of assembly, NDH-1 is composed of 14 different subunits. Subunits NuoB, C, D, E, F, and G constitute the peripheral sector of the complex.

The protein resides in the cell membrane. The enzyme catalyses a quinone + NADH + 5 H(+)(in) = a quinol + NAD(+) + 4 H(+)(out). In terms of biological role, NDH-1 shuttles electrons from NADH, via FMN and iron-sulfur (Fe-S) centers, to quinones in the respiratory chain. The immediate electron acceptor for the enzyme in this species is believed to be a menaquinone. Couples the redox reaction to proton translocation (for every two electrons transferred, four hydrogen ions are translocated across the cytoplasmic membrane), and thus conserves the redox energy in a proton gradient. This is NADH-quinone oxidoreductase subunit C from Moorella thermoacetica (strain ATCC 39073 / JCM 9320).